The primary structure comprises 87 residues: UPF0250 protein YPK_3025 (87 aa).

The protein belongs to the UPF0250 family.

In Yersinia pseudotuberculosis serotype O:3 (strain YPIII), this protein is UPF0250 protein YPK_3025.